Reading from the N-terminus, the 248-residue chain is Phycocyanobilin:ferredoxin oxidoreductase (248 aa).

This sequence belongs to the HY2 family.

The catalysed reaction is (2R,3Z)-phycocyanobilin + 4 oxidized [2Fe-2S]-[ferredoxin] = biliverdin IXalpha + 4 reduced [2Fe-2S]-[ferredoxin] + 4 H(+). Its function is as follows. Catalyzes the four-electron reduction of biliverdin IX-alpha (2-electron reduction at both the A and D rings); the reaction proceeds via an isolatable 2-electron intermediate, 181,182-dihydrobiliverdin. This Synechococcus elongatus (strain ATCC 33912 / PCC 7942 / FACHB-805) (Anacystis nidulans R2) protein is Phycocyanobilin:ferredoxin oxidoreductase (pcyA).